The primary structure comprises 195 residues: Xanthine phosphoribosyltransferase (195 aa).

The xanthine site is built by Leu20 and Asn27. Position 128-132 (128-132 (ANGQA)) interacts with 5-phospho-alpha-D-ribose 1-diphosphate. Lys156 is a xanthine binding site.

It belongs to the purine/pyrimidine phosphoribosyltransferase family. Xpt subfamily. In terms of assembly, homodimer.

It localises to the cytoplasm. It catalyses the reaction XMP + diphosphate = xanthine + 5-phospho-alpha-D-ribose 1-diphosphate. It participates in purine metabolism; XMP biosynthesis via salvage pathway; XMP from xanthine: step 1/1. Its function is as follows. Converts the preformed base xanthine, a product of nucleic acid breakdown, to xanthosine 5'-monophosphate (XMP), so it can be reused for RNA or DNA synthesis. This is Xanthine phosphoribosyltransferase from Lactiplantibacillus plantarum (strain ATCC BAA-793 / NCIMB 8826 / WCFS1) (Lactobacillus plantarum).